Reading from the N-terminus, the 783-residue chain is Coiled-coil domain-containing protein 30 (783 aa).

Basic and acidic residues predominate over residues 1 to 22 (MSQEKNEMFESEWSKEREREKQ). Disordered regions lie at residues 1-26 (MSQE…LASG), 101-191 (LGGK…LTMK), and 209-231 (LLQS…SSGE). A coiled-coil region spans residues 22–98 (QLASGLDTAE…LSQEFAQLNH (77 aa)). Polar residues predominate over residues 106–115 (APSNLITSEN). The segment covering 131–191 (IQSRKEETEE…EEKEQQLTMK (61 aa)) has biased composition (basic and acidic residues). Coiled-coil stretches lie at residues 165 to 497 (REGQ…LNVH) and 527 to 622 (DKRI…RIIR). A disordered region spans residues 731–755 (EEIKSKEAMASSKSPEKSPENLVCS).

This sequence belongs to the prefoldin subunit beta family. As to expression, expressed in brain, kidney, pancreas, placenta, liver, thymus and prostate.

This chain is Coiled-coil domain-containing protein 30 (CCDC30), found in Homo sapiens (Human).